We begin with the raw amino-acid sequence, 136 residues long: Nucleoside diphosphate kinase (136 aa).

The ATP site is built by Lys10, Phe58, Arg86, Thr92, Arg104, and Asn114. His117 acts as the Pros-phosphohistidine intermediate in catalysis.

It belongs to the NDK family. Homotetramer. Mg(2+) serves as cofactor.

It is found in the cytoplasm. The enzyme catalyses a 2'-deoxyribonucleoside 5'-diphosphate + ATP = a 2'-deoxyribonucleoside 5'-triphosphate + ADP. The catalysed reaction is a ribonucleoside 5'-diphosphate + ATP = a ribonucleoside 5'-triphosphate + ADP. In terms of biological role, major role in the synthesis of nucleoside triphosphates other than ATP. The ATP gamma phosphate is transferred to the NDP beta phosphate via a ping-pong mechanism, using a phosphorylated active-site intermediate. The polypeptide is Nucleoside diphosphate kinase (Corynebacterium efficiens (strain DSM 44549 / YS-314 / AJ 12310 / JCM 11189 / NBRC 100395)).